Reading from the N-terminus, the 291-residue chain is Ribosomal RNA small subunit methyltransferase H (291 aa).

S-adenosyl-L-methionine is bound by residues 25 to 27 (GGH), D45, F73, D88, and Q95.

Belongs to the methyltransferase superfamily. RsmH family.

Its subcellular location is the cytoplasm. It catalyses the reaction cytidine(1402) in 16S rRNA + S-adenosyl-L-methionine = N(4)-methylcytidine(1402) in 16S rRNA + S-adenosyl-L-homocysteine + H(+). In terms of biological role, specifically methylates the N4 position of cytidine in position 1402 (C1402) of 16S rRNA. The protein is Ribosomal RNA small subunit methyltransferase H of Flavobacterium psychrophilum (strain ATCC 49511 / DSM 21280 / CIP 103535 / JIP02/86).